We begin with the raw amino-acid sequence, 786 residues long: LPS-assembly protein LptD (786 aa).

The first 39 residues, 1–39 (MPPKPLFPNVFPGDGAPRKRRLALALLAVPGLVPAVSYA), serve as a signal peptide directing secretion. The disordered stretch occupies residues 767–786 (PGYTPLPPPPPPMSRFSNYE). The segment covering 770–779 (TPLPPPPPPM) has biased composition (pro residues).

The protein belongs to the LptD family. Component of the lipopolysaccharide transport and assembly complex. Interacts with LptE and LptA.

The protein localises to the cell outer membrane. Together with LptE, is involved in the assembly of lipopolysaccharide (LPS) at the surface of the outer membrane. This is LPS-assembly protein LptD from Burkholderia lata (strain ATCC 17760 / DSM 23089 / LMG 22485 / NCIMB 9086 / R18194 / 383).